A 234-amino-acid chain; its full sequence is Endonuclease V (234 aa).

2 residues coordinate Mg(2+): aspartate 36 and aspartate 104.

Belongs to the endonuclease V family. The cofactor is Mg(2+).

The protein resides in the cytoplasm. The catalysed reaction is Endonucleolytic cleavage at apurinic or apyrimidinic sites to products with a 5'-phosphate.. In terms of biological role, DNA repair enzyme involved in the repair of deaminated bases. Selectively cleaves double-stranded DNA at the second phosphodiester bond 3' to a deoxyinosine leaving behind the intact lesion on the nicked DNA. The chain is Endonuclease V from Yersinia pestis.